Here is a 595-residue protein sequence, read N- to C-terminus: MTTSSIRRQMKNIVNNYSEAEIKVREATSNDPWGPSSSLMTEIADLTYNVVAFSEIMSMVWKRLNDHGKNWRHVYKALTLLDYLIKTGSERVAQQCRENIFAIQTLKDFQYIDRDGKDQGINVREKSKQLVALLKDEERLKVERVQALKTKERMAQVATGVGSNQITFGRGSSQPNLSTSYSEQEYGKAGGSPASYHGSTSPRVSSELEQARPQTSGEEELQLQLALAMSREVAEQSSESVQTARGSKEERLRRGDDLRLQMALEESRRDTVKVPKKKEAKACCKPGSHSQQTTLLDLMDALPSSGPVTQKTEPWSAGASANQTNPWGGTVAPSNITDPWPSFGTKPAASVDPWGVPTTASTQSVPKNSDPWAASQQPASNAGKTTDAWGAAKPSSASGSFELFSNFNGTVKDDFSEFDNLRTSKKPAESGASVPPQDSRTTSPDLFESQSLTSASSKPSSARKTPESFLGPNAALVNLDSLVTKPAPPAQSLNPFLAPGAAAPAPVNPFQVNQPQPLTLNQLRGSPVLGSSASFGSGPGVETVAPMTSVAPHSSVGASGSSLTPLGPTAMNMVGSVGIPPSAAQSTGTTNPFLL.

Residues Arg-8, Lys-11, Arg-25, Asn-30, Arg-63, and His-73 each contribute to the a 1,2-diacyl-sn-glycero-3-phospho-(1D-myo-inositol-4,5-bisphosphate) site. Positions 12-144 constitute an ENTH domain; the sequence is NIVNNYSEAE…KDEERLKVER (133 aa). The span at 164-183 shows a compositional bias: polar residues; the sequence is NQITFGRGSSQPNLSTSYSE. 4 disordered regions span residues 164 to 254, 267 to 289, 305 to 396, and 423 to 469; these read NQIT…RLRR, SRRD…PGSH, SGPV…KPSS, and TSKK…PESF. Arg-170 is modified (omega-N-methylarginine). Phosphoserine is present on residues Ser-173, Ser-192, and Ser-195. Polar residues-rich tracts occupy residues 197-216 and 235-245; these read HGST…PQTS and EQSSESVQTAR. UIM domains lie at 218–237 and 255–274; these read EEEL…AEQS and GDDL…TVKV. Residues 306 to 337 are compositionally biased toward polar residues; that stretch reads GPVTQKTEPWSAGASANQTNPWGGTVAPSNIT. 4 consecutive repeat copies span residues 313–315, 325–327, 338–340, and 352–354. The interval 313–389 is 6 X 3 AA repeats of [DE]-P-W; that stretch reads EPWSAGASAN…SNAGKTTDAW (77 aa). Residues 358–367 are compositionally biased toward polar residues; sequence TTASTQSVPK. Residues 370 to 372 form repeat 5; the sequence is DPW. The span at 374–384 shows a compositional bias: polar residues; the sequence is ASQQPASNAGK. The stretch at 387–389 is repeat 6; that stretch reads DAW. Ser-443 carries the phosphoserine modification. The span at 449–460 shows a compositional bias: low complexity; sequence SQSLTSASSKPS. Residue Thr-465 is modified to Phosphothreonine. 2 consecutive repeat copies span residues 494–496 and 508–510. A 3 X 3 AA repeats of N-P-F region spans residues 494 to 593; that stretch reads NPFLAPGAAA…AQSTGTTNPF (100 aa). At Ser-526 the chain carries Phosphoserine. Residues 591–593 form repeat 3; the sequence is NPF.

The protein belongs to the epsin family. Binds EPS15, AP-2 and clathrin. Interacts with UBQLN2. Interacts with ITSN1. In terms of processing, ubiquitinated.

The protein localises to the cytoplasm. Its function is as follows. Plays a role in the formation of clathrin-coated invaginations and endocytosis. The chain is Epsin-2 (Epn2) from Mus musculus (Mouse).